Here is a 91-residue protein sequence, read N- to C-terminus: Small ribosomal subunit protein uS15 (91 aa).

Belongs to the universal ribosomal protein uS15 family. In terms of assembly, part of the 30S ribosomal subunit. Forms a bridge to the 50S subunit in the 70S ribosome, contacting the 23S rRNA.

Its function is as follows. One of the primary rRNA binding proteins, it binds directly to 16S rRNA where it helps nucleate assembly of the platform of the 30S subunit by binding and bridging several RNA helices of the 16S rRNA. In terms of biological role, forms an intersubunit bridge (bridge B4) with the 23S rRNA of the 50S subunit in the ribosome. The polypeptide is Small ribosomal subunit protein uS15 (Rickettsia felis (strain ATCC VR-1525 / URRWXCal2) (Rickettsia azadi)).